Reading from the N-terminus, the 460-residue chain is Mogroside I-E synthase (460 aa).

H25 serves as the catalytic Proton acceptor. The Charge relay role is filled by D114. The UDP-alpha-D-glucose site is built by S286, C339, Q341, W359, N360, S361, E364, D380, and Q381.

The protein belongs to the UDP-glycosyltransferase family. As to expression, highly expressed in young fruits 15 days after anthesis (15-DAA).

It carries out the reaction mogrol + UDP-alpha-D-glucose = mogroside IE + UDP + H(+). It catalyses the reaction mogroside I-A1 + UDP-alpha-D-glucose = mogroside IIE + UDP + H(+). The catalysed reaction is mogroside II-A1 + UDP-alpha-D-glucose = mogroside IIIX + UDP + H(+). The enzyme catalyses mogroside II-A + UDP-alpha-D-glucose = mogroside III + UDP + H(+). It carries out the reaction mogroside III-A1 + UDP-alpha-D-glucose = siamenoside I + UDP + H(+). It participates in secondary metabolite biosynthesis; terpenoid biosynthesis. Its function is as follows. UDP-glycosyltransferase involved in the biosynthesis of cucurbitacin and mogroside tetracyclic triterpene natural products (e.g. siamenoside I and mogrosides IV, V and VI). Cucurbitacins have cytotoxic properties and exhibit deterrent taste as a defense barrier against herbivores. Mogrosides are nonsugar highly oxygenated compounds used as high-intensity zero-calorie sweeteners; they also possess pharmacological properties such as regulating immunity, lowering blood sugar and lipid levels, protecting the liver, and acting as antioxidants and antitumor agents. Catalyzes the C3 primary glucosylation of mogrol, mogroside I-A1, mogroside II-A1, mogroside II-A and mogroside III-A1. The protein is Mogroside I-E synthase of Siraitia grosvenorii (Monk's fruit).